A 451-amino-acid chain; its full sequence is Tubulin alpha-2 chain (451 aa).

GTP is bound by residues glutamine 12, aspartate 73, serine 142, glycine 146, threonine 147, threonine 181, asparagine 208, and asparagine 230. A Mg(2+)-binding site is contributed by aspartate 73. Glutamate 256 is a catalytic residue.

This sequence belongs to the tubulin family. In terms of assembly, dimer of alpha and beta chains. A typical microtubule is a hollow water-filled tube with an outer diameter of 25 nm and an inner diameter of 15 nM. Alpha-beta heterodimers associate head-to-tail to form protofilaments running lengthwise along the microtubule wall with the beta-tubulin subunit facing the microtubule plus end conferring a structural polarity. Microtubules usually have 13 protofilaments but different protofilament numbers can be found in some organisms and specialized cells. The cofactor is Mg(2+).

Its subcellular location is the cytoplasm. It is found in the cytoskeleton. It catalyses the reaction GTP + H2O = GDP + phosphate + H(+). Tubulin is the major constituent of microtubules, a cylinder consisting of laterally associated linear protofilaments composed of alpha- and beta-tubulin heterodimers. Microtubules grow by the addition of GTP-tubulin dimers to the microtubule end, where a stabilizing cap forms. Below the cap, tubulin dimers are in GDP-bound state, owing to GTPase activity of alpha-tubulin. The protein is Tubulin alpha-2 chain (tubB) of Emericella nidulans (strain FGSC A4 / ATCC 38163 / CBS 112.46 / NRRL 194 / M139) (Aspergillus nidulans).